The chain runs to 262 residues: Lysine 5,6-aminomutase beta subunit (262 aa).

The B12-binding domain occupies 120–262 (KIVVVGASTG…VKTLNDRMNS (143 aa)). Adenosylcob(III)alamin contacts are provided by residues 130 to 136 (TDAHTVG) and histidine 133. Lysine 144 carries the N6-(pyridoxal phosphate)lysine modification. Residues 185-192 (LVSQTVTQ), 219-223 (LCGGP), and 239-244 (FGPGRF) each bind adenosylcob(III)alamin.

It belongs to the KamE family. As to quaternary structure, heterotetramer of 2 alpha and 2 beta subunits. It depends on adenosylcob(III)alamin as a cofactor. Requires pyridoxal 5'-phosphate as cofactor.

The catalysed reaction is (3S)-3,6-diaminohexanoate = (3S,5S)-3,5-diaminohexanoate. It catalyses the reaction D-lysine = (2R,5S)-2,5-diaminohexanoate. Its pathway is amino-acid metabolism; lysine degradation. With respect to regulation, rapidly inactivated in the presence of D-lysine and to a lesser extent in the absence of adenosylcobalamin (Adocbl). Activity is stable in the presence of Adocbl when D-lysine is absent. Adocbl imparts thermal stability at 37 degrees Celsius. In terms of biological role, catalyzes the migration of the L-beta-lysine and D-lysine epsilon amino group to the delta carbon to produce 3,5-diaminohexanoate and 2,5-diaminohexanoate, respectively. This chain is Lysine 5,6-aminomutase beta subunit (kamE), found in Acetoanaerobium sticklandii (strain ATCC 12662 / DSM 519 / JCM 1433 / CCUG 9281 / NCIMB 10654 / HF) (Clostridium sticklandii).